The primary structure comprises 1226 residues: Integrin alpha pat-2 (1226 aa).

The signal sequence occupies residues 1-25; sequence MREGSFPRRIGLLLGLLGLLAGVAT. The Extracellular segment spans residues 26–1154; sequence FNIDTKNVVV…IASEEGRDLP (1129 aa). FG-GAP repeat units lie at residues 27–94, 108–171, 178–233, 234–290, 291–345, 362–421, and 425–488; these read NIDT…TCRE, NGSH…NAEE, EPAR…TDRP, NTEY…MMIN, LTDE…KPQY, GKQI…GVRE, and QKIE…PESA. N108, N228, and N290 each carry an N-linked (GlcNAc...) asparagine glycan. The N-linked (GlcNAc...) asparagine glycan is linked to N608. Positions 620–622 match the Cell attachment site motif; sequence RGD. N-linked (GlcNAc...) asparagine glycosylation occurs at N679. Residues 709 to 733 form a disordered region; it reads SVGGDGSKSAPACSPTSDEPDSDGK. N775 and N819 each carry an N-linked (GlcNAc...) asparagine glycan. Disordered regions lie at residues 898–958 and 982–1040; these read LRIT…HVYE and DYEY…ARFS. Positions 920-931 are enriched in acidic residues; the sequence is REEDDESYEDET. Residues 932 to 951 are compositionally biased toward low complexity; the sequence is TTQSQSTRHQSTQHQTHHQS. Over residues 985–1005 the composition is skewed to acidic residues; it reads YIPDDQEYDGDDFEEEDDEDF. The segment covering 1010–1026 has biased composition (basic residues); it reads SKRVKRNPTPKKKKKGG. Residues 1027–1040 show a composition bias toward basic and acidic residues; it reads EHRGEPRSDKARFS. The helical transmembrane segment at 1155–1177 threads the bilayer; sequence WWLYLLAILIGLAILILLILLLW. At 1178 to 1226 the chain is on the cytoplasmic side; it reads RCGFFKRNRPPTEHAELRADRQPNAQYADSQSRYTSQDQYNQGRHGQML. A disordered region spans residues 1191–1226; it reads HAELRADRQPNAQYADSQSRYTSQDQYNQGRHGQML. Over residues 1200–1226 the composition is skewed to polar residues; that stretch reads PNAQYADSQSRYTSQDQYNQGRHGQML.

This sequence belongs to the integrin alpha chain family. Heterodimer of an alpha and a beta subunit. Interacts with beta subunit pat-3. Interacts with dep-1. Component of an integrin containing attachment complex, composed of at least pat-2, pat-3, pat-4, pat-6, unc-52, unc-97 and unc-112. Expressed in body-wall muscle cells, distal tip cells, and vulval tissue.

It is found in the membrane. Its function is as follows. Required for muscle development probably through the regulation of the actin-myosin cytoskeleton. Component of an integrin containing attachment complex, which is required for muscle maintenance. During the formation of neuromuscular junctions at the larval stage, negatively regulates membrane protrusion from body wall muscles, probably through lamins such as epi-1, lam-2 and unc-52. Required for distal tip cell migration and dorsal pathfinding. Required for egg-laying. May play a role in cell motility and cell-cell interactions. Plays a role in vulval development. Probably within the alpha pat-2/beta pat-3 integrin receptor complex, plays a role in the negative regulation of let-23 signaling and vulval induction. This is probably partly by restricting the mobility of the let-23 receptor on the plasma membrane of vulval cells which thereby attenuates let-23 signaling. In Caenorhabditis elegans, this protein is Integrin alpha pat-2.